A 164-amino-acid polypeptide reads, in one-letter code: UBA-like domain-containing protein 2 (164 aa).

N-acetylserine is present on S2. The disordered stretch occupies residues S128–R164. Residues G146–R164 show a composition bias toward low complexity.

Belongs to the UBALD family.

In Homo sapiens (Human), this protein is UBA-like domain-containing protein 2 (UBALD2).